A 591-amino-acid polypeptide reads, in one-letter code: Aspartate--tRNA(Asp/Asn) ligase (591 aa).

E170 lines the L-aspartate pocket. The tract at residues 194–197 (QLFK) is aspartate. R216 is an L-aspartate binding site. ATP contacts are provided by residues 216–218 (RDE) and Q225. H448 lines the L-aspartate pocket. E482 contacts ATP. R489 provides a ligand contact to L-aspartate. 534–537 (GWDR) contributes to the ATP binding site. The segment at 559 to 591 (GGVDPLTDAPAPITEQQRKESGIDVKPEPSKPH) is disordered. Residues 574 to 591 (QQRKESGIDVKPEPSKPH) are compositionally biased toward basic and acidic residues.

This sequence belongs to the class-II aminoacyl-tRNA synthetase family. Type 1 subfamily. In terms of assembly, homodimer.

The protein localises to the cytoplasm. It carries out the reaction tRNA(Asx) + L-aspartate + ATP = L-aspartyl-tRNA(Asx) + AMP + diphosphate. Aspartyl-tRNA synthetase with relaxed tRNA specificity since it is able to aspartylate not only its cognate tRNA(Asp) but also tRNA(Asn). Reaction proceeds in two steps: L-aspartate is first activated by ATP to form Asp-AMP and then transferred to the acceptor end of tRNA(Asp/Asn). This chain is Aspartate--tRNA(Asp/Asn) ligase, found in Mycolicibacterium paratuberculosis (strain ATCC BAA-968 / K-10) (Mycobacterium paratuberculosis).